The chain runs to 305 residues: Protoheme IX farnesyltransferase (305 aa).

The next 9 membrane-spanning stretches (helical) occupy residues 31-51, 52-72, 96-118, 123-145, 151-171, 179-199, 225-245, 247-267, and 281-301; these read VISL…YSVH, PFIA…AGAI, VIES…FFMA, LLAS…IWLK, NIVI…AAVS, IILF…LALF, ILIY…IGMN, FIYL…AGSL, and FAYS…TNTI.

Belongs to the UbiA prenyltransferase family. Protoheme IX farnesyltransferase subfamily.

It is found in the cell inner membrane. The enzyme catalyses heme b + (2E,6E)-farnesyl diphosphate + H2O = Fe(II)-heme o + diphosphate. The protein operates within porphyrin-containing compound metabolism; heme O biosynthesis; heme O from protoheme: step 1/1. Its function is as follows. Converts heme B (protoheme IX) to heme O by substitution of the vinyl group on carbon 2 of heme B porphyrin ring with a hydroxyethyl farnesyl side group. The sequence is that of Protoheme IX farnesyltransferase from Rickettsia massiliae (strain Mtu5).